Here is a 701-residue protein sequence, read N- to C-terminus: Aryl hydrocarbon receptor repressor (701 aa).

Positions 25-78 (TMGAEKSNPSKRHRDRLNTELDHLASLLPFSPDIISKLDKLSVLRLSVSYLRVK) constitute a bHLH domain. Residues 106-176 (PVQEGRLLLE…RQLHWAMDPP (71 aa)) enclose the PAS domain. The span at 409–430 (TEQRSQESTTKLTRQPSKNEPS) shows a compositional bias: polar residues. Residues 409–432 (TEQRSQESTTKLTRQPSKNEPSTC) form a disordered region. Residues 555–701 (ASTTSCLWLG…SKGSDGIFLP (147 aa)) are needed for transcriptional repression. Glycyl lysine isopeptide (Lys-Gly) (interchain with G-Cter in SUMO2) cross-links involve residues K583 and K660.

In terms of assembly, interacts with ARNT, ANKRA2, HDAC4 and HDAC5. Interacts with ARNT; forms a heterodimer with ARNT.

The protein resides in the cytoplasm. It is found in the nucleus. Functionally, mediates dioxin toxicity and is involved in regulation of cell growth and differentiation. Represses the transcription activity of AHR by competing with this transcription factor for heterodimer formation with the ARNT and subsequently binding to the xenobiotic response element (XRE) sequence present in the promoter regulatory region of variety of genes. Represses CYP1A1 by binding the XRE sequence and recruiting ANKRA2, HDAC4 and/or HDAC5. Autoregulates its expression by associating with its own XRE site. The protein is Aryl hydrocarbon receptor repressor (Ahrr) of Mus musculus (Mouse).